Consider the following 196-residue polypeptide: Crossover junction endodeoxyribonuclease RuvC (196 aa).

Active-site residues include Asp19, Glu80, and Asp153. Mg(2+) contacts are provided by Asp19, Glu80, and Asp153.

The protein belongs to the RuvC family. Homodimer which binds Holliday junction (HJ) DNA. The HJ becomes 2-fold symmetrical on binding to RuvC with unstacked arms; it has a different conformation from HJ DNA in complex with RuvA. In the full resolvosome a probable DNA-RuvA(4)-RuvB(12)-RuvC(2) complex forms which resolves the HJ. Mg(2+) serves as cofactor.

The protein localises to the cytoplasm. It carries out the reaction Endonucleolytic cleavage at a junction such as a reciprocal single-stranded crossover between two homologous DNA duplexes (Holliday junction).. Its function is as follows. The RuvA-RuvB-RuvC complex processes Holliday junction (HJ) DNA during genetic recombination and DNA repair. Endonuclease that resolves HJ intermediates. Cleaves cruciform DNA by making single-stranded nicks across the HJ at symmetrical positions within the homologous arms, yielding a 5'-phosphate and a 3'-hydroxyl group; requires a central core of homology in the junction. The consensus cleavage sequence is 5'-(A/T)TT(C/G)-3'. Cleavage occurs on the 3'-side of the TT dinucleotide at the point of strand exchange. HJ branch migration catalyzed by RuvA-RuvB allows RuvC to scan DNA until it finds its consensus sequence, where it cleaves and resolves the cruciform DNA. In Cutibacterium acnes (strain DSM 16379 / KPA171202) (Propionibacterium acnes), this protein is Crossover junction endodeoxyribonuclease RuvC.